The following is a 101-amino-acid chain: Small ribosomal subunit protein uS14 (101 aa).

This sequence belongs to the universal ribosomal protein uS14 family. In terms of assembly, part of the 30S ribosomal subunit. Contacts proteins S3 and S10.

Binds 16S rRNA, required for the assembly of 30S particles and may also be responsible for determining the conformation of the 16S rRNA at the A site. The sequence is that of Small ribosomal subunit protein uS14 from Pseudomonas putida (strain W619).